We begin with the raw amino-acid sequence, 587 residues long: 2-succinyl-5-enolpyruvyl-6-hydroxy-3-cyclohexene-1-carboxylate synthase (587 aa).

It belongs to the TPP enzyme family. MenD subfamily. Homodimer. Mg(2+) is required as a cofactor. It depends on Mn(2+) as a cofactor. Thiamine diphosphate serves as cofactor.

It catalyses the reaction isochorismate + 2-oxoglutarate + H(+) = 5-enolpyruvoyl-6-hydroxy-2-succinyl-cyclohex-3-ene-1-carboxylate + CO2. The protein operates within quinol/quinone metabolism; 1,4-dihydroxy-2-naphthoate biosynthesis; 1,4-dihydroxy-2-naphthoate from chorismate: step 2/7. It functions in the pathway cofactor biosynthesis; phylloquinone biosynthesis. Its function is as follows. Catalyzes the thiamine diphosphate-dependent decarboxylation of 2-oxoglutarate and the subsequent addition of the resulting succinic semialdehyde-thiamine pyrophosphate anion to isochorismate to yield 2-succinyl-5-enolpyruvyl-6-hydroxy-3-cyclohexene-1-carboxylate (SEPHCHC). The sequence is that of 2-succinyl-5-enolpyruvyl-6-hydroxy-3-cyclohexene-1-carboxylate synthase from Prochlorococcus marinus (strain MIT 9301).